A 647-amino-acid polypeptide reads, in one-letter code: Leucine-rich repeat and WD repeat-containing protein 1 (647 aa).

LRR repeat units follow at residues 22–43, 48–69, 70–91, and 92–113; these read KIRS…PKLL, QLQE…LGLS, HLRV…CQFP, and KLEE…LKVS. The segment at 204 to 267 is disordered; it reads RTQVQKANSP…GSPVAGSDGS (64 aa). Phosphoserine occurs at positions 212, 243, 251, 259, and 264. WD repeat units lie at residues 282–335, 341–379, 383–422, 426–472, 484–526, 542–582, and 598–646; these read HSKN…LHKY, EFFS…LLHV, FCCG…LWDI, NQDY…CWDV, EVEF…LWSW, VVLA…LYDV, and APTQ…IWGR.

It belongs to the LRWD1 family. As to quaternary structure, integral component of the ORC complex. Directly interacts with CDT1, GMNN and ORC2. Interacts with ORC2 only when non-ubiquitinated; this interaction prevents LRWD1 ubiquitination and degradation. Some of these interactions are regulated in a cell-cycle dependent manner. Interaction with ORC1 occurs predominantly during G1. Association with phosphorylated ORC1 during mitosis is not efficient. Interaction with CDT1 occurs during G1 phase, as well as during mitosis with phosphorylated CDT1. Interaction with GMNN occurs from G1/S to mitosis. Interaction with ORC2 is observed throughout the cell cycle. The stoichiometry of the ORCA/ORC/CDT1/GMNN complex is 1:1:1:2. Interacts with CUL4A and DDB1; this interaction may lead to ubiquitination. Post-translationally, ubiquitinated; undergoes 'Lys-48'-linked polyubiquitination leading to proteasomal degradation. Ubiquitination occurs within the WD repeats at the end of the G1 phase. Ubiquitination may be catalyzed by the CUL4-DDB1 E3 ubiquitin-protein ligase complex and other E3 ligases. In terms of tissue distribution, testis-specific. Drastically down-regulated in testis from patients with Sertoli cell-only syndrome (SCOS).

Its subcellular location is the nucleus. It is found in the chromosome. It localises to the centromere. The protein localises to the telomere. The protein resides in the cytoplasm. Its subcellular location is the cytoskeleton. It is found in the microtubule organizing center. It localises to the centrosome. The protein localises to the kinetochore. Functionally, required for G1/S transition. Recruits and stabilizes the origin recognition complex (ORC) onto chromatin during G1 to establish pre-replication complex (preRC) and to heterochromatic sites in post-replicated cells. Binds a combination of DNA and histone methylation repressive marks on heterochromatin. Binds histone H3 and H4 trimethylation marks H3K9me3, H3K27me3 and H4K20me3 in a cooperative manner with DNA methylation. Required for silencing of major satellite repeats. May be important ORC2, ORC3 and ORC4 stability. The polypeptide is Leucine-rich repeat and WD repeat-containing protein 1 (LRWD1) (Homo sapiens (Human)).